Here is a 680-residue protein sequence, read N- to C-terminus: Multisubstrate pseudouridine synthase 7 (680 aa).

Basic and acidic residues-rich tracts occupy residues 1-30 and 99-116; these read MSQENHVDVPRKRIRIDQSESSRNLERNGL and ILSKATGDKETEDAKDSS. Disordered stretches follow at residues 1–42, 99–136, and 206–229; these read MSQE…DLSG, ILSKATGDKETEDAKDSSNQDISNDQKAPSFKEQEPAT, and TKGNGTFTVSKTTRKNQPRSRRDP. Positions 206–216 are enriched in polar residues; the sequence is TKGNGTFTVSK. The active-site Nucleophile is Asp277. The TRUD domain occupies 358–596; that stretch reads GFINYFGLQR…PGDYRKLLVR (239 aa).

This sequence belongs to the pseudouridine synthase TruD family.

The protein resides in the nucleus. It is found in the cytoplasm. It carries out the reaction uridine in 5S rRNA = pseudouridine in 5S rRNA. The enzyme catalyses uridine in snRNA = pseudouridine in snRNA. It catalyses the reaction uridine(13) in tRNA = pseudouridine(13) in tRNA. The catalysed reaction is a uridine in mRNA = a pseudouridine in mRNA. Catalyzes pseudouridylation at position 35 in U2 snRNA stem-loop II region which induces particular conformation of the mRNA-U2 snRNA duplex and places the nucleophile in an accessible position for the first step of splicing. Also catalyzes pseudouridylation at position 56 in U2 snRNA. Also catalyzes pseudouridylation at position 50 in 5S rRNA, position 13 in cytoplasmic tRNAs, and position 35 in pre-tRNA(Tyr). Pseudouridine residues in tRNAs may stabilize the local RNA conformation, favor interactions with protein partners and play an important role in the stabilization of the codon-anticodon interaction with mRNA. Also catalyzes pseudouridylation of mRNAs in response to heat shock: mediates pseudouridylation of mRNAs with the consensus sequence 5'-UGUAR-3'. This is Multisubstrate pseudouridine synthase 7 (pus7) from Schizosaccharomyces pombe (strain 972 / ATCC 24843) (Fission yeast).